A 400-amino-acid chain; its full sequence is Lysophospholipid transporter LplT (400 aa).

11 helical membrane passes run 19-39 (VIVA…ATLA), 53-73 (VLQM…GQIA), 91-111 (AGAA…LVGI), 139-159 (LMEA…GVLA), 164-184 (IAAL…NLFI), 227-247 (LFWG…PVAL), 257-277 (YLNA…AKLV), 281-301 (TVSR…IFSL), 304-324 (ALLP…FFVV), 352-372 (NSAM…GVPA), and 373-393 (VAIG…LWIW).

The protein belongs to the major facilitator superfamily. LplT (TC 2.A.1.42) family.

Its subcellular location is the cell inner membrane. In terms of biological role, catalyzes the facilitated diffusion of 2-acyl-glycero-3-phosphoethanolamine (2-acyl-GPE) into the cell. This Salmonella gallinarum (strain 287/91 / NCTC 13346) protein is Lysophospholipid transporter LplT.